The primary structure comprises 154 residues: MKIELCLYSGYKIYPGHGKRYARTDGRVYTFLNAKCEASFLMKRNPREITWTVLYRRKHKKGQQEEIQKKRSRRTAKFQRAITGASLTEIMAKRNQKPEVRKAQREQAVKAAKEKKKADQVGKRKAPAKARATAPKTKAPKTVKAAAPRVGGKR.

The interval 92–154 (AKRNQKPEVR…AAAPRVGGKR (63 aa)) is disordered. A compositionally biased stretch (basic and acidic residues) spans 96–122 (QKPEVRKAQREQAVKAAKEKKKADQVG). Positions 129 to 154 (KARATAPKTKAPKTVKAAAPRVGGKR) are enriched in low complexity.

Belongs to the eukaryotic ribosomal protein eL24 family.

This is Large ribosomal subunit protein eL24 (RPL24) from Branchiostoma belcheri (Amphioxus).